The following is a 256-amino-acid chain: uncharacterized protein (256 aa).

The region spanning 16 to 83 (VRLQKILSRA…DSLVYLALNK (68 aa)) is the S4 RNA-binding domain. Asp121 serves as the catalytic Nucleophile.

It belongs to the pseudouridine synthase RsuA family.

It catalyses the reaction a uridine in RNA = a pseudouridine in RNA. This is an uncharacterized protein from Mycobacterium leprae (strain TN).